We begin with the raw amino-acid sequence, 1128 residues long: Probable serine/threonine-protein kinase DDB_G0283337 (1128 aa).

Over residues M1–N17 the composition is skewed to low complexity. Disordered stretches follow at residues M1–P21, I60–N100, R131–N151, N236–N256, and N375–Q504. Composition is skewed to low complexity over residues N243–N256 and N375–S502. Positions L777 to E1054 constitute a Protein kinase domain. ATP-binding positions include I783–V791 and K809. D904 functions as the Proton acceptor in the catalytic mechanism.

The protein belongs to the protein kinase superfamily. Ser/Thr protein kinase family.

It carries out the reaction L-seryl-[protein] + ATP = O-phospho-L-seryl-[protein] + ADP + H(+). The enzyme catalyses L-threonyl-[protein] + ATP = O-phospho-L-threonyl-[protein] + ADP + H(+). The sequence is that of Probable serine/threonine-protein kinase DDB_G0283337 from Dictyostelium discoideum (Social amoeba).